The primary structure comprises 566 residues: Urease subunit alpha (566 aa).

One can recognise a Urease domain in the interval 128–566; sequence GGVDTHIHFI…LPMAQRYFLF (439 aa). Ni(2+) contacts are provided by His133, His135, and Lys216. Lys216 carries the N6-carboxylysine modification. Position 218 (His218) interacts with substrate. Ni(2+)-binding residues include His245 and His271. His319 (proton donor) is an active-site residue. A Ni(2+)-binding site is contributed by Asp359.

It belongs to the metallo-dependent hydrolases superfamily. Urease alpha subunit family. As to quaternary structure, may form a heterohexamer of 3 UreC (alpha) and 3 UreAB (gamma/beta) subunits. May also form a heterotrimer of UreA (gamma), UreB (beta) and UreC (alpha) subunits. Three heterotrimers associate to form the active enzyme. The cofactor is Ni cation. Post-translationally, carboxylation allows a single lysine to coordinate two nickel ions.

It is found in the cytoplasm. It catalyses the reaction urea + 2 H2O + H(+) = hydrogencarbonate + 2 NH4(+). The protein operates within nitrogen metabolism; urea degradation; CO(2) and NH(3) from urea (urease route): step 1/1. The protein is Urease subunit alpha of Pseudomonas savastanoi pv. phaseolicola (strain 1448A / Race 6) (Pseudomonas syringae pv. phaseolicola (strain 1448A / Race 6)).